The chain runs to 179 residues: Large ribosomal subunit protein uL5 (179 aa).

It belongs to the universal ribosomal protein uL5 family. Part of the 50S ribosomal subunit; part of the 5S rRNA/L5/L18/L25 subcomplex. Contacts the 5S rRNA and the P site tRNA. Forms a bridge to the 30S subunit in the 70S ribosome.

Functionally, this is one of the proteins that bind and probably mediate the attachment of the 5S RNA into the large ribosomal subunit, where it forms part of the central protuberance. In the 70S ribosome it contacts protein S13 of the 30S subunit (bridge B1b), connecting the 2 subunits; this bridge is implicated in subunit movement. Contacts the P site tRNA; the 5S rRNA and some of its associated proteins might help stabilize positioning of ribosome-bound tRNAs. This Marinomonas sp. (strain MWYL1) protein is Large ribosomal subunit protein uL5.